A 3814-amino-acid chain; its full sequence is Hybrid PKS-NRPS synthetase pyvA (3814 aa).

The 340-residue stretch at 1-340 (MDPQQRLLLE…GSNAHVILES (340 aa)) folds into the Ketosynthase family 3 (KS3) domain. Residues Cys87, His222, and His261 each act as for beta-ketoacyl synthase activity in the active site. The tract at residues 441 to 758 (VFTGQGAQWH…PYFASLSRGV (318 aa)) is malonyl-CoA:ACP transacylase (MAT) domain. The active-site For malonyltransferase activity is Ser533. The interval 835-970 (HPILGAKMPG…GLISISTATT (136 aa)) is N-terminal hotdog fold. The segment at 835–1149 (HPILGAKMPG…LRLTSLSNGR (315 aa)) is dehydratase (DH) domain. Residues 835–1151 (HPILGAKMPG…LTSLSNGRAA (317 aa)) form the PKS/mFAS DH domain. His867 functions as the Proton acceptor; for dehydratase activity in the catalytic mechanism. A disordered region spans residues 970–993 (TADGAPSRKPYRQHPQPQPGRMST). The interval 991-1151 (MSTASFPAQS…LTSLSNGRAA (161 aa)) is C-terminal hotdog fold. The active-site Proton donor; for dehydratase activity is the Asp1057. An enoyl reductase (ER) domain region spans residues 1520-1836 (GLLETLVWED…MGRHTGKVVL (317 aa)). The interval 1864-2036 (TYLLVGGLGG…PASSMNCGRI (173 aa)) is ketoreductase (KR) domain. The Carrier 1 domain occupies 2141 to 2220 (IDLSDRVALL…ALVEKAIGLF (80 aa)). Position 2180 is an O-(pantetheine 4'-phosphoryl)serine (Ser2180). Residues 2228-2238 (QQQQQSVQSSS) are compositionally biased toward low complexity. The disordered stretch occupies residues 2228–2270 (QQQQQSVQSSSAPSNDDQSPTFNKNLDSQDPSTSLQIPKADCS). The span at 2239-2263 (APSNDDQSPTFNKNLDSQDPSTSLQ) shows a compositional bias: polar residues. The tract at residues 2273 to 2718 (LPMSTFQNRL…PEVRLAGTLE (446 aa)) is condensation (C) domain 7. The interval 2738-3149 (PLNLPRRIVE…DGQLEFLGRI (412 aa)) is adenylation (A) domain 8. Positions 3257 to 3304 (SGKTDRRALGASQAPGTPPQHGAGPAAASTLDPAQAQAQDRADEEVGD) are disordered. The region spanning 3304-3379 (DRTMATVTRV…QLVELVHSKV (76 aa)) is the Carrier 2 domain. O-(pantetheine 4'-phosphoryl)serine is present on Ser3339. Residues 3428-3680 (MTGAESFTGI…VDLVPVNYLT (253 aa)) are thioesterase (TE) domain.

In the C-terminal section; belongs to the NRP synthetase family.

Its pathway is secondary metabolite biosynthesis. Its function is as follows. Hybrid PKS-NRPS synthetase; part of the gene cluster that mediates the biosynthesis of pyranoviolin A, a pyranonigrin analog with a C-3 methoxy group. Initially, the PKS portion of pyvA synthesizes C-10 carbon chain from 5 molecules of malonyl-CoA, which is then condensed with the thiolation (T) domain-bound glycine activated by the adenylation (A) domain. The subsequent chain release by Dieckmann condensation (DKC) could be catalyzed by the TE domain present at the C-terminus of pyvA and/or the alpha/beta hydrolase pyvD, installing the tetramic acid moiety. The FAD-dependent monooxygenase pyvC next epoxidizes one of the olefins of the polyketide part, and the epoxide ring-opening induces the dihydro-gamma-pyrone ring formation. The cytochrome P450 monooxygeanse pyvB would be responsible for the 2 consecutive reactions, in which the dihydro-gamma-pyrone is oxidized to gamma-pyrone and C-7 is hydroxylated to yield pyranonigrin F. Finally, the O-methyltransferase pyvH methylates the C-3 hydroxy group to complete the biosynthesis. This Aspergillus violaceofuscus (strain CBS 115571) protein is Hybrid PKS-NRPS synthetase pyvA.